The sequence spans 271 residues: Transmembrane protein 150A (271 aa).

The Cytoplasmic segment spans residues 1–2; sequence MT. A helical transmembrane segment spans residues 3–23; that stretch reads AWILLPVSLSAFSITGIWTVY. The Extracellular portion of the chain corresponds to 24–75; that stretch reads AMAVMNRHVCPVENWSYNESCSPDPAEQGGPKSCCTLDDVPLISKCGTYPPE. N37 and N41 each carry an N-linked (GlcNAc...) asparagine glycan. Residues 76-96 traverse the membrane as a helical segment; sequence SCLFSLIGNMGAVMVALICLL. Residues 97–108 are Cytoplasmic-facing; sequence RYGQLLEQSRHS. Residues 109–129 form a helical membrane-spanning segment; it reads WINTTALITGCTNAAGLVVVG. Over 130–140 the chain is Extracellular; the sequence is NFQVDHAKSLH. Residues 141–161 form a helical membrane-spanning segment; it reads YIGTGVAFTAGLLFVCLHCVL. Over 162–178 the chain is Cytoplasmic; it reads FYHGATTPLDMAMAYLR. A helical transmembrane segment spans residues 179 to 199; it reads SVLAVIAFITLVLSGVFFLHE. Over 200-211 the chain is Extracellular; that stretch reads SSQLQHGAALCE. The helical transmembrane segment at 212-232 threads the bilayer; sequence WVFVLDILIFYGTFSYEFGTI. The Cytoplasmic portion of the chain corresponds to 233–271; it reads SSDTLVAALQPAPGRACKSSGSSSTSTHLNCAPESIAMI.

Belongs to the DRAM/TMEM150 family. Interacts (via C-terminal cytoplasmic tail) with PI4KA.

The protein resides in the cell membrane. Its function is as follows. Regulates localization of phosphatidylinositol 4-kinase (PI4K) to the plasma membrane, possibly by reducing the association of TTC7 (TTC7A or TTC7B) with the PI4K complex. Acts as a regulator of phosphatidylinositol 4-phosphate (PtdIns(4)P) synthesis. May also play a role in fasting-induced catabolism. The chain is Transmembrane protein 150A (Tmem150a) from Mus musculus (Mouse).